Consider the following 238-residue polypeptide: Ribonuclease PH (238 aa).

Phosphate is bound by residues Arg-86 and 124–126 (GTR).

The protein belongs to the RNase PH family. In terms of assembly, homohexameric ring arranged as a trimer of dimers.

It carries out the reaction tRNA(n+1) + phosphate = tRNA(n) + a ribonucleoside 5'-diphosphate. Its function is as follows. Phosphorolytic 3'-5' exoribonuclease that plays an important role in tRNA 3'-end maturation. Removes nucleotide residues following the 3'-CCA terminus of tRNAs; can also add nucleotides to the ends of RNA molecules by using nucleoside diphosphates as substrates, but this may not be physiologically important. Probably plays a role in initiation of 16S rRNA degradation (leading to ribosome degradation) during starvation. This Pasteurella multocida (strain Pm70) protein is Ribonuclease PH.